The primary structure comprises 315 residues: Methionyl-tRNA formyltransferase (315 aa).

Residue 111 to 114 (SLLP) participates in (6S)-5,6,7,8-tetrahydrofolate binding.

This sequence belongs to the Fmt family.

The catalysed reaction is L-methionyl-tRNA(fMet) + (6R)-10-formyltetrahydrofolate = N-formyl-L-methionyl-tRNA(fMet) + (6S)-5,6,7,8-tetrahydrofolate + H(+). Its function is as follows. Attaches a formyl group to the free amino group of methionyl-tRNA(fMet). The formyl group appears to play a dual role in the initiator identity of N-formylmethionyl-tRNA by promoting its recognition by IF2 and preventing the misappropriation of this tRNA by the elongation apparatus. This Flavobacterium johnsoniae (strain ATCC 17061 / DSM 2064 / JCM 8514 / BCRC 14874 / CCUG 350202 / NBRC 14942 / NCIMB 11054 / UW101) (Cytophaga johnsonae) protein is Methionyl-tRNA formyltransferase.